The following is a 420-amino-acid chain: Transcription factor dbaG (420 aa).

It is found in the nucleus. Its function is as follows. Transcription factor that coregulates the expression of the gene cluster that mediates the biosynthesis of the antibiotic 2,4- dihydroxy-3-methyl-6-(2-oxopropyl)benzaldehyde (DHMBA) and its derivatives. Specifically positively regulates the expression of the FAD-dependent oxidoreductase dbaF. In Emericella nidulans (strain FGSC A4 / ATCC 38163 / CBS 112.46 / NRRL 194 / M139) (Aspergillus nidulans), this protein is Transcription factor dbaG.